The sequence spans 496 residues: Glutamate--tRNA ligase 2 (496 aa).

Positions 13–23 (PSPTGRLHVGG) match the 'HIGH' region motif. The 'KMSKS' region motif lies at 255–259 (KLSKR). Lys-258 serves as a coordination point for ATP.

This sequence belongs to the class-I aminoacyl-tRNA synthetase family. Glutamate--tRNA ligase type 1 subfamily. In terms of assembly, monomer.

The protein localises to the cytoplasm. It carries out the reaction tRNA(Glu) + L-glutamate + ATP = L-glutamyl-tRNA(Glu) + AMP + diphosphate. Functionally, catalyzes the attachment of glutamate to tRNA(Glu) in a two-step reaction: glutamate is first activated by ATP to form Glu-AMP and then transferred to the acceptor end of tRNA(Glu). The chain is Glutamate--tRNA ligase 2 from Rubrobacter xylanophilus (strain DSM 9941 / JCM 11954 / NBRC 16129 / PRD-1).